The sequence spans 290 residues: uncharacterized protein (290 aa).

Disordered regions lie at residues C89–S157, M172–S217, and T261–K290. Composition is skewed to basic and acidic residues over residues D106 to P124 and K142 to S152. 2 stretches are compositionally biased toward polar residues: residues M172–G183 and K193–T202. 2 stretches are compositionally biased toward low complexity: residues M207–S217 and P274–K290.

This is an uncharacterized protein from Caenorhabditis elegans.